The primary structure comprises 276 residues: Putative E3 ubiquitin-protein ligase SINA-like 9 (276 aa).

Residues 38 to 74 (CPICCEALTSPIFQCDNGHLACGSCCPKLSNKCPACT) form an RING-type zinc finger. Residues 88–274 (VLESILIPCP…MQVFIIENVD (187 aa)) are SBD. An SIAH-type zinc finger spans residues 91–149 (SILIPCPNVRFGCTKSFFYGKESAHEKECIFSQCSCPSSVCDYTGSYKDLYAHYKLTHS). Residues Cys96, Cys103, His115, Cys119, Cys126, Cys131, His143, and His148 each contribute to the Zn(2+) site.

This sequence belongs to the SINA (Seven in absentia) family.

It catalyses the reaction S-ubiquitinyl-[E2 ubiquitin-conjugating enzyme]-L-cysteine + [acceptor protein]-L-lysine = [E2 ubiquitin-conjugating enzyme]-L-cysteine + N(6)-ubiquitinyl-[acceptor protein]-L-lysine.. It functions in the pathway protein modification; protein ubiquitination. E3 ubiquitin-protein ligase that mediates ubiquitination and subsequent proteasomal degradation of target proteins. E3 ubiquitin ligases accept ubiquitin from an E2 ubiquitin-conjugating enzyme in the form of a thioester and then directly transfers the ubiquitin to targeted substrates. It probably triggers the ubiquitin-mediated degradation of different substrates. This is Putative E3 ubiquitin-protein ligase SINA-like 9 from Arabidopsis thaliana (Mouse-ear cress).